The sequence spans 158 residues: Large ribosomal subunit protein uL23 (158 aa).

Positions 1 to 43 (MPPKSSTKAEPKASSAKTQVAKAKSAKKAVVKGTSSKTQRRIR) are disordered. The span at 12–23 (KASSAKTQVAKA) shows a compositional bias: low complexity.

It belongs to the universal ribosomal protein uL23 family.

Functionally, this protein binds to a specific region on the 26S rRNA. This Puccinia graminis (Black stem rust fungus) protein is Large ribosomal subunit protein uL23.